The chain runs to 373 residues: Chloroperoxidase (373 aa).

Residues 1–20 (MFSKVLPFVGAVAALPHSVR) form the signal peptide. Pyrrolidone carboxylic acid is present on Gln21. N-linked (GlcNAc...) asparagine glycosylation occurs at Asn33. Cys50 serves as a coordination point for heme. Cysteines 100 and 108 form a disulfide. Asn114 is a glycosylation site (N-linked (GlcNAc...) asparagine). The Mn(2+) site is built by Glu125, His126, and Ser129. Glu204 is a catalytic residue. Asn237 carries N-linked (GlcNAc...) asparagine glycosylation. An O-linked (Man) threonine glycan is attached at Thr259. O-linked (Man) serine glycans are attached at residues Ser260, Ser262, Ser263, and Ser269. A glycan (O-linked (Man) threonine) is linked at Thr271. Ser272 carries an O-linked (Man) serine glycan. Thr273 carries O-linked (Man) threonine glycosylation. Residues Thr296, Thr304, and Thr314 are each glycosylated (O-linked (Man...) threonine). A propeptide spanning residues 322 to 373 (EAAPAATTSMAVFKNPYLEAIGTQDIKNQQAYVSSKAAAMASAMAANKARNL) is cleaved from the precursor.

The protein belongs to the chloroperoxidase family. Heme b serves as cofactor. Requires Mn(2+) as cofactor. Post-translationally, N- and O-glycosylated.

The catalysed reaction is RH + Cl(-) + H2O2 = RCl + 2 H2O.. Its function is as follows. Catalyzes peroxidative halogenations involved in the biosynthesis of clardariomycin (2,2-dichloro-1,3-cyclo-pentenedione). The enzyme also has potent catalase activity and in the absence of halide ion, acts as a peroxidase similar to plant peroxidases. The polypeptide is Chloroperoxidase (CPO) (Leptoxyphium fumago (Caldariomyces fumago)).